The chain runs to 302 residues: Sulfate adenylyltransferase subunit 2 (302 aa).

The interval 279–302 (ERQGRAIDHDSSGSMELKKRQGYF) is disordered. Residues 280-302 (RQGRAIDHDSSGSMELKKRQGYF) are compositionally biased toward basic and acidic residues.

This sequence belongs to the PAPS reductase family. CysD subfamily. In terms of assembly, heterodimer composed of CysD, the smaller subunit, and CysN.

It catalyses the reaction sulfate + ATP + H(+) = adenosine 5'-phosphosulfate + diphosphate. It functions in the pathway sulfur metabolism; hydrogen sulfide biosynthesis; sulfite from sulfate: step 1/3. Functionally, with CysN forms the ATP sulfurylase (ATPS) that catalyzes the adenylation of sulfate producing adenosine 5'-phosphosulfate (APS) and diphosphate, the first enzymatic step in sulfur assimilation pathway. APS synthesis involves the formation of a high-energy phosphoric-sulfuric acid anhydride bond driven by GTP hydrolysis by CysN coupled to ATP hydrolysis by CysD. The chain is Sulfate adenylyltransferase subunit 2 from Aliivibrio fischeri (strain ATCC 700601 / ES114) (Vibrio fischeri).